The sequence spans 145 residues: Mannitol-specific phosphotransferase enzyme IIA component (145 aa).

The PTS EIIA type-2 domain occupies threonine 4 to valine 143. Residue histidine 64 is the Tele-phosphohistidine intermediate of the active site. Histidine 64 carries the post-translational modification Phosphohistidine; by HPr.

Its subcellular location is the cytoplasm. In terms of biological role, the phosphoenolpyruvate-dependent sugar phosphotransferase system (sugar PTS), a major carbohydrate active transport system, catalyzes the phosphorylation of incoming sugar substrates concomitantly with their translocation across the cell membrane. The enzyme II CmtAB PTS system is involved in D-mannitol transport. The chain is Mannitol-specific phosphotransferase enzyme IIA component (mtlF) from Halalkalibacterium halodurans (strain ATCC BAA-125 / DSM 18197 / FERM 7344 / JCM 9153 / C-125) (Bacillus halodurans).